Here is a 262-residue protein sequence, read N- to C-terminus: MARGPKKHLKRLNAPKSWMLDKLGGVFAPRPSTGPHKLRESLPLIIMLRNRLKYALTGAEVKKIVKQRLIKVDGKVRTDTNYPAGFMDVVTIEKTGEFFRLLYDVKGRFTLHRITPEEAKYKLCRVKRVQVGPKGVPFLTTHDARTIRYPDPLIKVNDTVKVDLATGKIDDYIKFDSGNVCMVTGGHNLGRVGVITSRERHPGSFDIVHVKDSQGHSFATRLNYIFVIGKSTKPYISLPRGKGIKLSVAEERDRRLQAKSQH.

Positions 42–105 (LPLIIMLRNR…GEFFRLLYDV (64 aa)) constitute an S4 RNA-binding domain.

It belongs to the eukaryotic ribosomal protein eS4 family.

The sequence is that of Small ribosomal subunit protein eS4 (RpS4) from Ixodes scapularis (Black-legged tick).